The sequence spans 269 residues: GTP cyclohydrolase FolE2 (269 aa).

It belongs to the GTP cyclohydrolase IV family.

The enzyme catalyses GTP + H2O = 7,8-dihydroneopterin 3'-triphosphate + formate + H(+). It participates in cofactor biosynthesis; 7,8-dihydroneopterin triphosphate biosynthesis; 7,8-dihydroneopterin triphosphate from GTP: step 1/1. In terms of biological role, converts GTP to 7,8-dihydroneopterin triphosphate. The sequence is that of GTP cyclohydrolase FolE2 from Burkholderia multivorans (strain ATCC 17616 / 249).